Reading from the N-terminus, the 155-residue chain is Small ribosomal subunit protein uS7c (155 aa).

The protein belongs to the universal ribosomal protein uS7 family. In terms of assembly, part of the 30S ribosomal subunit.

It localises to the plastid. The protein localises to the chloroplast. Functionally, one of the primary rRNA binding proteins, it binds directly to 16S rRNA where it nucleates assembly of the head domain of the 30S subunit. In Spirogyra maxima (Green alga), this protein is Small ribosomal subunit protein uS7c (rps7).